The sequence spans 548 residues: Chaperonin GroEL (548 aa).

ATP is bound by residues 30–33 (TLGP), lysine 51, 87–91 (DGTTT), glycine 415, 479–481 (NAA), and aspartate 495. The segment at 526–548 (KEDKSSDLGSAPAGGMGGMGGMM) is disordered. Over residues 537-548 (PAGGMGGMGGMM) the composition is skewed to gly residues.

It belongs to the chaperonin (HSP60) family. In terms of assembly, forms a cylinder of 14 subunits composed of two heptameric rings stacked back-to-back. Interacts with the co-chaperonin GroES.

The protein resides in the cytoplasm. The enzyme catalyses ATP + H2O + a folded polypeptide = ADP + phosphate + an unfolded polypeptide.. Its function is as follows. Together with its co-chaperonin GroES, plays an essential role in assisting protein folding. The GroEL-GroES system forms a nano-cage that allows encapsulation of the non-native substrate proteins and provides a physical environment optimized to promote and accelerate protein folding. The polypeptide is Chaperonin GroEL (Buchnera aphidicola subsp. Pterocomma populeum).